The primary structure comprises 648 residues: Protein associated with UVRAG as autophagy enhancer (648 aa).

Polar residues-rich tracts occupy residues 131–146 (QESL…TSPS) and 157–173 (PHLT…SSSR). A disordered region spans residues 131-173 (QESLLKNPKTVATSPSPKEGSARSESPHLTASTDDGDARSSSR). Position 144 is a phosphoserine (serine 144). The interaction with UVRAG stretch occupies residues 183 to 222 (ETFMLPADVEKENLHFYAADIIISVIENMKCNLPNQQQPE). N6-acetyllysine is present on residues lysine 469, lysine 509, lysine 519, lysine 559, and lysine 619.

As to quaternary structure, interacts with UVRAG; the interaction is direct and promotes association with the PI3K/PI3KC3 and HOPS complexes. Interacts with STX17. Phosphorylated by MTOR at Ser-144 under nutrient-rich conditions. Phosphorylation prevents acetylation by KAT5/TIP60 and impairs RUBCNL/PACER function and autophagosome maturation. Under autophagy induction, Phosphorylation by MTOR is repressed, enabling acetylation by KAT5/TIP60. Post-translationally, acetylated by KAT5/TIP60 under autophagy induction, promoting autophagosome maturation and lipid metabolism. Acetylation is prevented by phosphorylation by MTOR. Lys-469 and Lys-559 constitute the key sites for tuning function in autophagy.

Its subcellular location is the cytoplasmic vesicle. The protein resides in the autophagosome membrane. In terms of biological role, regulator of autophagy that promotes autophagosome maturation by facilitating the biogenesis of phosphatidylinositol 3-phosphate (PtdIns(3)P) in late steps of autophagy. Acts by antagonizing RUBCN, thereby stimulating phosphatidylinositol 3-kinase activity of the PI3K/PI3KC3 complex. Following anchorage to the autophagosomal SNARE STX17, promotes the recruitment of PI3K/PI3KC3 and HOPS complexes to the autophagosome to regulate the fusion specificity of autophagosomes with late endosomes/lysosomes. Binds phosphoinositides phosphatidylinositol 3-phosphate (PtdIns(3)P), 4-phosphate (PtdIns(4)P) and 5-phosphate (PtdIns(5)P). In addition to its role in autophagy, acts as a regulator of lipid and glycogen homeostasis. May act as a tumor suppressor. This chain is Protein associated with UVRAG as autophagy enhancer, found in Mus musculus (Mouse).